Here is a 1914-residue protein sequence, read N- to C-terminus: Diacylglycerol kinase eta (1914 aa).

Basic and acidic residues predominate over residues 1–10 (MSHLKLDTLH). The disordered stretch occupies residues 1 to 37 (MSHLKLDTLHVQRSPRGSRRSSRSSGRSSACSSGSIS). The segment covering 23 to 37 (RSSGRSSACSSGSIS) has biased composition (low complexity). One can recognise a PH domain in the interval 82 to 175 (AIIKEGFLLK…WLGSLKTATA (94 aa)). 2 consecutive Phorbol-ester/DAG-type zinc fingers follow at residues 195–245 (HHHW…IANC) and 268–319 (PHQW…AVAC). Positions 350-486 (GNFSPLLVFV…DRWSIMVFEK (137 aa)) constitute a DAGKc domain. 5 disordered regions span residues 621 to 642 (EKDQ…SEKE), 783 to 805 (GANI…NTPT), 1016 to 1053 (TLCS…PPRI), 1116 to 1135 (QHRG…TPTN), and 1175 to 1216 (PNTI…TVSL). Residues 1175–1187 (PNTILTTSTSPTK) are compositionally biased toward polar residues. Residues 1851 to 1914 (WSVNEVVTWL…LQAIKDLSEN (64 aa)) enclose the SAM domain.

The protein belongs to the eukaryotic diacylglycerol kinase family.

It is found in the cytoplasm. The enzyme catalyses a 1,2-diacyl-sn-glycerol + ATP = a 1,2-diacyl-sn-glycero-3-phosphate + ADP + H(+). In terms of biological role, phosphorylates diacylglycerol (DAG) to generate phosphatidic acid (PA). This Drosophila sechellia (Fruit fly) protein is Diacylglycerol kinase eta.